We begin with the raw amino-acid sequence, 400 residues long: Methylthioribose kinase (400 aa).

Residues asparagine 44, lysine 61, and 115–117 (EDL) each bind ATP. Aspartate 233 lines the substrate pocket. Residue 250–252 (DPE) coordinates ATP. Arginine 340 provides a ligand contact to substrate.

Belongs to the methylthioribose kinase family. Homodimer.

The catalysed reaction is 5-(methylsulfanyl)-D-ribose + ATP = 5-(methylsulfanyl)-alpha-D-ribose 1-phosphate + ADP + H(+). It participates in amino-acid biosynthesis; L-methionine biosynthesis via salvage pathway; S-methyl-5-thio-alpha-D-ribose 1-phosphate from S-methyl-5'-thioadenosine (hydrolase route): step 2/2. Its function is as follows. Catalyzes the phosphorylation of methylthioribose into methylthioribose-1-phosphate. In Geobacillus sp. (strain WCH70), this protein is Methylthioribose kinase.